The primary structure comprises 618 residues: Manganese lipoxygenase (618 aa).

Residues 1–16 form the signal peptide; sequence MRSRILAIVFAARHVA. The segment covering 36 to 45 has biased composition (low complexity); the sequence is SSTTVLPSPT. Positions 36–58 are disordered; sequence SSTTVLPSPTQYTLPNNDPNQGA. A compositionally biased stretch (polar residues) spans 46–58; the sequence is QYTLPNNDPNQGA. In terms of domain architecture, Lipoxygenase spans 47–618; that stretch reads YTLPNNDPNQ…PAVNPFFLSV (572 aa). N-linked (GlcNAc...) asparagine glycans are attached at residues Asn-60, Asn-91, Asn-106, Asn-116, and Asn-157. Residues His-290, His-294, His-478, and Asn-482 each contribute to the Mn(2+) site. An N-linked (GlcNAc...) asparagine glycan is attached at Asn-513. Val-618 contacts Mn(2+).

This sequence belongs to the lipoxygenase family. Manganese lipoxygenase subfamily. Mn(2+) serves as cofactor. N- and O-glycosylated.

It localises to the secreted. The catalysed reaction is (9Z,12Z)-octadecadienoate + O2 = (11S)-hydroperoxy-(9Z,12Z)-octadecadienoate. It carries out the reaction (9Z,12Z)-octadecadienoate + O2 = (13R)-hydroperoxy-(9Z,11E)-octadecadienoate. The enzyme catalyses (9Z,12Z,15Z)-octadecatrienoate + O2 = (11S)-hydroperoxy-(9Z,12Z,15Z)-octadecatrienoate. It catalyses the reaction (9Z,12Z,15Z)-octadecatrienoate + O2 = (13R)-hydroperoxy-(9Z,11E,15Z)-octadecatrienoate. Functionally, lipoxygenase that metabolizes linoleic and alpha-linolenic acids to 11S- and 13R-hydroperoxy fatty acids. At the end of lipoxygenation, the intermediate product 11S-HPODE from linoleic acid is then transformed into 13R-HPODE as the final product. It also acts on alpha-linolenic acid producing 11S-HPOTrE and 13R-HPOTrE with subsequent transformation of 11S-HPOTrE to 13R-HPOTrE as final product. This Gaeumannomyces avenae (Oat take-all root rot fungus) protein is Manganese lipoxygenase.